Reading from the N-terminus, the 331-residue chain is Glycerol-3-phosphate dehydrogenase [NAD(P)+] (331 aa).

Trp-11, Arg-30, and Lys-105 together coordinate NADPH. Positions 105, 134, and 136 each coordinate sn-glycerol 3-phosphate. Position 138 (Ala-138) interacts with NADPH. Sn-glycerol 3-phosphate contacts are provided by Lys-189, Asp-242, Ser-252, Arg-253, and Asn-254. Lys-189 acts as the Proton acceptor in catalysis. Arg-253 provides a ligand contact to NADPH. Val-277 and Glu-279 together coordinate NADPH.

The protein belongs to the NAD-dependent glycerol-3-phosphate dehydrogenase family.

It is found in the cytoplasm. The catalysed reaction is sn-glycerol 3-phosphate + NAD(+) = dihydroxyacetone phosphate + NADH + H(+). It catalyses the reaction sn-glycerol 3-phosphate + NADP(+) = dihydroxyacetone phosphate + NADPH + H(+). It functions in the pathway membrane lipid metabolism; glycerophospholipid metabolism. Its function is as follows. Catalyzes the reduction of the glycolytic intermediate dihydroxyacetone phosphate (DHAP) to sn-glycerol 3-phosphate (G3P), the key precursor for phospholipid synthesis. The polypeptide is Glycerol-3-phosphate dehydrogenase [NAD(P)+] (Herminiimonas arsenicoxydans).